Reading from the N-terminus, the 263-residue chain is Receptor-transporting protein 1 (263 aa).

The Cytoplasmic segment spans residues 1–238 (MRIFRPWRLR…ETGSGCNFCS (238 aa)). Residues 88–197 (ASGRFHCSWC…GEFCEACQEG (110 aa)) form a 3CxxC-type zinc finger. Residues 239 to 259 (IPWCLFWATVLMLIIYLQFSF) form a helical membrane-spanning segment. The Extracellular portion of the chain corresponds to 260-263 (RTSV).

It belongs to the TMEM7 family. Interacts with olfactory receptors. In terms of tissue distribution, predominantly expressed in olfactory and vomeronasal organs, in mature olfactory sensory neurons.

It is found in the cell membrane. Functionally, specifically promotes functional cell surface expression of olfactory receptors, but not of other GPCRs. The chain is Receptor-transporting protein 1 (Rtp1) from Mus musculus (Mouse).